Here is a 164-residue protein sequence, read N- to C-terminus: Interferon gamma (164 aa).

Positions 1–19 are cleaved as a signal peptide; the sequence is MTCQTYNLFVLSVIMIYYG. Asn-42 and Asn-61 each carry an N-linked (GlcNAc...) asparagine glycan.

The protein belongs to the type II (or gamma) interferon family. As to quaternary structure, homodimer.

It is found in the secreted. Produced by lymphocytes activated by specific antigens or mitogens. IFN-gamma, in addition to having antiviral activity, has important immunoregulatory functions. It is a potent activator of macrophages, it has antiproliferative effects on transformed cells and it can potentiate the antiviral and antitumor effects of the type I interferons. This Gallus gallus (Chicken) protein is Interferon gamma (IFNG).